A 154-amino-acid polypeptide reads, in one-letter code: Malate dehydrogenase (154 aa).

Positions 3 and 9 each coordinate substrate. Residues Asn16 and 39–41 (ITN) contribute to the NAD(+) site. Residues Asn41 and Arg75 each coordinate substrate. Residue His99 is the Proton acceptor of the active site. An NAD(+)-binding site is contributed by Met149.

This sequence belongs to the LDH/MDH superfamily. MDH type 1 family. In terms of assembly, homodimer.

It carries out the reaction (S)-malate + NAD(+) = oxaloacetate + NADH + H(+). In terms of biological role, catalyzes the reversible oxidation of malate to oxaloacetate. This chain is Malate dehydrogenase (mdh), found in Pectobacterium carotovorum subsp. carotovorum (Erwinia carotovora subsp. carotovora).